We begin with the raw amino-acid sequence, 147 residues long: Large ribosomal subunit protein uL13 (147 aa).

This sequence belongs to the universal ribosomal protein uL13 family. Part of the 50S ribosomal subunit.

This protein is one of the early assembly proteins of the 50S ribosomal subunit, although it is not seen to bind rRNA by itself. It is important during the early stages of 50S assembly. In Lactobacillus johnsonii (strain CNCM I-12250 / La1 / NCC 533), this protein is Large ribosomal subunit protein uL13.